We begin with the raw amino-acid sequence, 75 residues long: Tautomerase PptA (75 aa).

Proline 2 (proton acceptor; via imino nitrogen) is an active-site residue.

Belongs to the 4-oxalocrotonate tautomerase family. PptA subfamily. Homodimer.

The protein localises to the cytoplasm. This chain is Tautomerase PptA, found in Escherichia coli O139:H28 (strain E24377A / ETEC).